Here is a 184-residue protein sequence, read N- to C-terminus: Putative NAD(P)H nitroreductase HI_1542 (184 aa).

Residues Arg-10 to Ser-12, Arg-35, and His-39 contribute to the FMN site. Position 122–127 (Ala-122–Gly-127) interacts with NAD(+). Trp-132 to Ser-134 serves as a coordination point for FMN.

Belongs to the nitroreductase family. As to quaternary structure, homodimer. It depends on FMN as a cofactor.

The chain is Putative NAD(P)H nitroreductase HI_1542 from Haemophilus influenzae (strain ATCC 51907 / DSM 11121 / KW20 / Rd).